Here is an 853-residue protein sequence, read N- to C-terminus: Translation initiation factor IF-2 (853 aa).

Disordered stretches follow at residues 1-68 (MSDT…ASDG) and 94-265 (LEQR…DKTS). Positions 20–32 (RKTSGTVKQSFSH) are enriched in polar residues. Residues 94-161 (LEQRKAEEAS…ASREAVERPS (68 aa)) show a composition bias toward basic and acidic residues. Low complexity predominate over residues 163–176 (APRAAPAAQTPPAA). Basic and acidic residues-rich tracts occupy residues 196–219 (PARD…DAER) and 245–265 (RARE…DKTS). The region spanning 347–515 (PRAPIVTIMG…AISIQAEILE (169 aa)) is the tr-type G domain. Residues 356–363 (GHVDHGKT) are G1. 356–363 (GHVDHGKT) contacts GTP. Residues 381 to 385 (GITQH) form a G2 region. Positions 403-406 (DTPG) are G3. Residues 403–407 (DTPGH) and 457–460 (TKSD) contribute to the GTP site. Positions 457-460 (TKSD) are G4. The segment at 493-495 (SAK) is G5.

This sequence belongs to the TRAFAC class translation factor GTPase superfamily. Classic translation factor GTPase family. IF-2 subfamily.

It is found in the cytoplasm. One of the essential components for the initiation of protein synthesis. Protects formylmethionyl-tRNA from spontaneous hydrolysis and promotes its binding to the 30S ribosomal subunits. Also involved in the hydrolysis of GTP during the formation of the 70S ribosomal complex. This Hyphomonas neptunium (strain ATCC 15444) protein is Translation initiation factor IF-2.